The sequence spans 347 residues: Chlorophyllase type 0 (347 aa).

Positions 1–19 are cleaved as a signal peptide; sequence MAKLLLLIFGVFIFVNSQA. Positions 20 to 30 are excised as a propeptide; it reads QTFPTILEKHN. The short motif at 160-164 is the GXSXG element; that stretch reads GHSRG. Residue Ser-162 is the Nucleophile of the active site. The active-site Charge relay system is the Asp-191. Residues Asn-215, Asn-229, and Asn-251 are each glycosylated (N-linked (GlcNAc...) asparagine). The active-site Charge relay system is the His-262. Residue Asn-321 is glycosylated (N-linked (GlcNAc...) asparagine).

This sequence belongs to the AB hydrolase superfamily. Lipase family.

The enzyme catalyses a chlorophyll + H2O = a chlorophyllide + phytol + H(+). The catalysed reaction is chlorophyll a + H2O = phytol + chlorophyllide a + H(+). It participates in porphyrin-containing compound metabolism; chlorophyll degradation. Its activity is regulated as follows. Inhibited by diisopropyl fluorophosphate (DFP), phenylmethanesulfonyl fluoride (PMSF) or p-chloromercuribenzoic acid (PCMB), but not by N-ethylmaleimide (NEM) or iodoacetamide. In terms of biological role, catalyzes the hydrolysis of ester bond in chlorophyll to yield chlorophyllide and phytol. This Chenopodium album (Fat hen) protein is Chlorophyllase type 0.